Here is a 621-residue protein sequence, read N- to C-terminus: Nitrate reductase [NADH] 1 (621 aa).

The 76-residue stretch at 249–324 (GKEFTMSEVR…LDTYRIGELI (76 aa)) folds into the Cytochrome b5 heme-binding domain. Heme is bound by residues His-284 and His-307. The FAD-binding FR-type domain maps to 361–473 (REKIHCRLVG…KGPLGHVEYT (113 aa)). Residues 413–416 (RAYT), 430–432 (LVK), Phe-435, 447–449 (LMT), Ser-497, and Thr-500 each bind FAD.

The protein belongs to the nitrate reductase family. In terms of assembly, homodimer. FAD serves as cofactor. The cofactor is heme. Requires Mo-molybdopterin as cofactor.

The catalysed reaction is nitrite + NAD(+) + H2O = nitrate + NADH + H(+). Its function is as follows. Nitrate reductase is a key enzyme involved in the first step of nitrate assimilation in plants, fungi and bacteria. The protein is Nitrate reductase [NADH] 1 of Zea mays (Maize).